Reading from the N-terminus, the 1156-residue chain is MLKVYYTFGCPNCGGPIDDEHLLAGVPCSKCLPGRVENLDYRVIYDLLVKNSTLKGYAEYFYDNETFEEIVRIFKRVIGNEPWNLQKYWIKRLAKSESFSLSAPTGLGKTTTLLVYSLFFSNTTLYVVPTNSLKDQICERLRNMGAKVSCNDVKEEYINVATFNRILRHYDNYVSLQPKLVIVDDSDMILKSGKTTEVMAKILGISEEIFQYAISLIRLKRILKFNEDDKELKNKIVELEYKIGSWKPFVQFLVASATLRPKGIKQQALRTLIGFEPSTIQTYLRNIADLYYQGVDIEAILDKISDNGGLLLVSKEYGREKMLELKEIIEKRGYSTGLAISGRKFLNKFTEGKIDYLIGSASYYGVAVRGLDEPKRLKYVIFYGIPKIRLNLTDALNNPSLIVKIGELLNIDVKDIRRKLLFLSPPEFQILRYSLMKDEELSGKLKDIKVNLINIKEKIWDVLKSDNIKKLKADTFLVTENNGKYYVYIPDTVTYIQASGRSSRIISNGLTFGISIVLVDNIDLLDILSQKLKKIIPNFMFKNINEVDIRELKSLAVSSREVSTSQKKKINIKTILLIVESPTKAKTIARLFGRPSRREVHGIPVYETIILVNDEILITNIIATKGHITDLTTENIGYYGVEVGNNEFNAYYSPIYKCYNCGKTFTIKSNTCPYCGSVFISSSEKVVSALRKLSTEVDEIYIASDPDQEGEKIAYDVAMLISPYNKNIYRIKYHEITRNGILNAILNKGKINMNLVKSQIVRRIEDRWIGFELSLALKSMFYERNHGSGRVQGPVLSWIVERTKEYKKNYGWILYIKLGDYAIKKFFRIKEEANKFIEKLNIKINLISERKEIQNPLPPFTTDSLLMDAYDKLGIGSQIVMKIAQDLFESGLITYHRTDSTHVSALGISIAKEYLESKNLNDSFSGRSWGNEGTHEAIRPTSSMDTESLIKDIEDNPNKYFIKFTKYHLRIYDLIFRRFIASQMKPAEVTYSKFEIFINGEKLEVELPTKISGGFSIIYPLKTYVVSEKYSTYLTKGSIIPLFTYAEIIKNMKEKEIGRPSTYAKTISALIRHGYVVESKRKALLIATNKGIKAYEFLSSCCSDLISENRTKLLLQKIDKIANGDVNVDYVLEDLHKEITQISGKLVNSLKLDTNV.

An RG N-terminal-type zinc finger spans residues 1 to 38; that stretch reads MLKVYYTFGCPNCGGPIDDEHLLAGVPCSKCLPGRVEN. Zn(2+) is bound by residues Cys-10, Cys-13, Cys-28, and Cys-31. ATP is bound by residues Gln-86 and 103 to 110; that span reads APTGLGKT. One can recognise a Helicase ATP-binding domain in the interval 90–277; sequence IKRLAKSESF…ALRTLIGFEP (188 aa). Positions 184-187 match the DEAD box motif; sequence DDSD. The tract at residues 570 to 1156 is topoisomerase I; that stretch reads INIKTILLIV…VNSLKLDTNV (587 aa). A Toprim domain is found at 574-736; that stretch reads TILLIVESPT…NIYRIKYHEI (163 aa). A Mg(2+)-binding site is contributed by Glu-580. The RG C-terminal-type zinc finger occupies 655-682; that stretch reads IYKCYNCGKTFTIKSNTCPYCGSVFISS. Zn(2+)-binding residues include Cys-658, Cys-661, Cys-672, and Cys-675. Asp-705 contacts Mg(2+). One can recognise a Topo IA-type catalytic domain in the interval 752–1143; the sequence is NMNLVKSQIV…DLHKEITQIS (392 aa). Tyr-895 (O-(5'-phospho-DNA)-tyrosine intermediate) is an active-site residue.

It in the N-terminal section; belongs to the DEAD box helicase family. DDVD subfamily. This sequence in the C-terminal section; belongs to the type IA topoisomerase family. Monomer. Zn(2+) serves as cofactor. Requires Mg(2+) as cofactor.

The protein localises to the cytoplasm. The catalysed reaction is ATP + H2O = ADP + phosphate + H(+). In terms of biological role, modifies the topological state of DNA by introducing positive supercoils in an ATP-dependent process, increasing the linking number in steps of +1. Binds to single-stranded DNA, transiently cleaves and then rejoins the ends, introducing a positive supercoil in the process. The scissile phosphodiester is attacked by the catalytic tyrosine of the enzyme, resulting in the formation of a DNA-(5'-phosphotyrosyl)-enzyme intermediate. Probably involved in rewinding DNA strands in regions of the chromosome that have opened up to allow replication, transcription, DNA repair and/or for DNA protection. The protein is Reverse gyrase 1 of Sulfurisphaera tokodaii (strain DSM 16993 / JCM 10545 / NBRC 100140 / 7) (Sulfolobus tokodaii).